Reading from the N-terminus, the 340-residue chain is DnaJ homolog subfamily B member 1 (340 aa).

The 69-residue stretch at 2–70 (GKDYYQTLGL…REIFDRYGEE (69 aa)) folds into the J domain. A Phosphothreonine modification is found at T307.

As to quaternary structure, interacts with DNAJC3. Interacts with HSF1 (via transactivation domain); this interaction results in the inhibition of heat shock- and HSF1-induced transcriptional activity during the attenuation and recovery phase period of the heat shock response. Interacts with BAG3.

It is found in the cytoplasm. The protein localises to the nucleus. The protein resides in the nucleolus. Its function is as follows. Interacts with HSP70 and can stimulate its ATPase activity. Stimulates the association between HSC70 and HIP. Negatively regulates heat shock-induced HSF1 transcriptional activity during the attenuation and recovery phase period of the heat shock response. Stimulates ATP hydrolysis and the folding of unfolded proteins mediated by HSPA1A/B (in vitro). This chain is DnaJ homolog subfamily B member 1 (Dnajb1), found in Mus musculus (Mouse).